A 570-amino-acid chain; its full sequence is GTPase Obg (570 aa).

Positions 2–168 (SDFVDRVTVH…RDIILELKSI (167 aa)) constitute an Obg domain. Positions 15-43 (GDGGNGSAGIRREKYKPLAGPNGGNGGKG) are disordered. The region spanning 169-349 (ADVALVGFPS…LNFALAKLVK (181 aa)) is the OBG-type G domain. GTP is bound by residues 175–182 (GFPSAGKS), 200–204 (FTTLV), 221–224 (DVPG), 301–304 (NKID), and 330–332 (STA). Mg(2+) is bound by residues serine 182 and threonine 202. Positions 382–468 (GRNAQVREFE…ERAVAFDWDP (87 aa)) constitute an OCT domain. The interval 521–570 (RAAMQAERAAGHWADPSIDDDRHDEQSLFGRGEVEEYEDEPGADGSRQLD) is disordered.

This sequence belongs to the TRAFAC class OBG-HflX-like GTPase superfamily. OBG GTPase family. As to quaternary structure, monomer. Mg(2+) serves as cofactor.

The protein localises to the cytoplasm. Its function is as follows. An essential GTPase which binds GTP, GDP and possibly (p)ppGpp with moderate affinity, with high nucleotide exchange rates and a fairly low GTP hydrolysis rate. Plays a role in control of the cell cycle, stress response, ribosome biogenesis and in those bacteria that undergo differentiation, in morphogenesis control. This Bifidobacterium animalis subsp. lactis (strain AD011) protein is GTPase Obg.